The primary structure comprises 518 residues: Ribonuclease Y (518 aa).

The chain crosses the membrane as a helical span at residues 2-22 (GSIIISALLALVIGAVVGFFV). The region spanning 208-271 (TVSVVNLPND…ETARIALDKL (64 aa)) is the KH domain. One can recognise an HD domain in the interval 334–427 (VLKHSVEVAF…VAAADALSAA (94 aa)).

The protein belongs to the RNase Y family.

The protein localises to the cell membrane. Endoribonuclease that initiates mRNA decay. This Geobacillus thermodenitrificans (strain NG80-2) protein is Ribonuclease Y.